The primary structure comprises 772 residues: MPVFPFCRPMTCAGLAAALVAFSVGVQAQPAPADASAQIRYTRYGVPHIVAKDERGLGYGVGYAYAQDNLCLLANEVLTVSGERSRYFGAKGQTLEQRDNLASDLFFTWLNSPAAVDAFLQAQPASVQALLAGYASGYNRALVERRRQGLPAECGDGEWVRPISSQDLVKLTRRLLAEGGVGQFVEALAGAQPPTLARAQSSAGFASALARQERFAAERGSNAVAVGAQRSANGRGLLLANPHFPWMGGMRFYQMQLTIPGQLDVMGAALPGLPVVNIGFNQHLAWTHTVDTSKHFTLYRLQLDPKDPTRYVLDGKSLPMARQTIRVAVKGTDGSLSQIERQVYSSQFGPVVQWPGRLDWDAQAAYSVRDANLENSRVLQQWYQINRADSLAALKGSVEQLQGIPWVNTLAVDQGGRALYLNQSVVPYVDQQLLDTCSNPQAQGRLVVLDGSRSACQWKVDAQAAQPGIFPARLLPSLEREDFVQNSNDPAWMANPAQPLTGYSPLVSRNDQPLGMRGRFALQRLQGKARLGVDELQRMVTDEEVYLASLVLPDLLQWCKGASADVQAVCSSLAAWNGKADLDSGMGLVHFQNLFNALAEHPESWRVAFNPADPQHTPRGLAVEQAAVSRLVHQAALASLKQVSESGVAGAARWGQVQQALDGTPVPGGPQALGVYNAIYSVPHGQGKRLVVSGTSYLQLVSFTDKGPEARGLLAFSQSSEKASAHASDQTKAFAAKQLALIPFTEAQIKADPEYREVVISERDKGAVVSQP.

The first 28 residues, 1-28 (MPVFPFCRPMTCAGLAAALVAFSVGVQA), serve as a signal peptide directing secretion. The propeptide at 199–220 (AQSSAGFASALARQERFAAERG) is spacer peptide. The active-site Nucleophile is S221.

Belongs to the peptidase S45 family. In terms of assembly, heterodimer of an alpha subunit and a beta subunit processed from the same precursor.

It is found in the periplasm. The enzyme catalyses an N-acyl-L-homoserine lactone + H2O = L-homoserine lactone + a carboxylate. Catalyzes the deacylation of acyl-homoserine lactone (AHL or acyl-HSL), releasing homoserine lactone (HSL) and the corresponding fatty acid. Possesses a specificity for the degradation of long-chain acyl-HSLs (side chains of 11 to 14 carbons in length). In Pseudomonas putida (strain ATCC 47054 / DSM 6125 / CFBP 8728 / NCIMB 11950 / KT2440), this protein is Acyl-homoserine lactone acylase PvdQ (pvdQ).